Here is a 119-residue protein sequence, read N- to C-terminus: Beta-2-microglobulin (119 aa).

The N-terminal stretch at 1–20 is a signal peptide; it reads MARFVVVPLLVLLSLFGLEA. The 90-residue stretch at 25-114 folds into the Ig-like C1-type domain; that stretch reads PKIQVYSRYP…VTFSTPKTVK (90 aa). An intrachain disulfide couples Cys-45 to Cys-100.

This sequence belongs to the beta-2-microglobulin family. As to quaternary structure, heterodimer of an alpha chain and a beta chain. Beta-2-microglobulin is the beta-chain of major histocompatibility complex class I molecules.

It localises to the secreted. In terms of biological role, component of the class I major histocompatibility complex (MHC). Involved in the presentation of peptide antigens to the immune system. The sequence is that of Beta-2-microglobulin (B2M) from Saguinus bicolor bicolor (Pied bare-faced tamarin).